A 913-amino-acid polypeptide reads, in one-letter code: Protein translocase subunit SecA (913 aa).

ATP is bound by residues Gln87, 105-109 (GEGKT), and Asp517. Disordered regions lie at residues 568 to 588 (ESRR…DPGS) and 871 to 913 (EVAV…GKLS). 4 residues coordinate Zn(2+): Cys897, Cys899, Cys908, and His909. The segment covering 903–913 (KKYKQCHGKLS) has biased composition (basic residues).

Belongs to the SecA family. Monomer and homodimer. Part of the essential Sec protein translocation apparatus which comprises SecA, SecYEG and auxiliary proteins SecDF-YajC and YidC. Requires Zn(2+) as cofactor.

The protein resides in the cell inner membrane. It is found in the cytoplasm. The enzyme catalyses ATP + H2O + cellular proteinSide 1 = ADP + phosphate + cellular proteinSide 2.. Its function is as follows. Part of the Sec protein translocase complex. Interacts with the SecYEG preprotein conducting channel. Has a central role in coupling the hydrolysis of ATP to the transfer of proteins into and across the cell membrane, serving both as a receptor for the preprotein-SecB complex and as an ATP-driven molecular motor driving the stepwise translocation of polypeptide chains across the membrane. This chain is Protein translocase subunit SecA, found in Coxiella burnetii (strain RSA 493 / Nine Mile phase I).